Consider the following 396-residue polypeptide: Inositol polyphosphate multikinase (396 aa).

Residues 1–13 (MAAEPPALRLRPP) show a composition bias toward low complexity. The segment at 1-22 (MAAEPPALRLRPPGSTGDSPPV) is disordered. Residue alanine 2 is modified to N-acetylalanine. The residue at position 19 (serine 19) is a Phosphoserine. Lysine 58 serves as a coordination point for ATP. Arginine 65 provides a ligand contact to substrate. Residues 114 to 116 (EDV) and aspartate 127 each bind ATP. Substrate is bound by residues lysine 129, 143–150 (KIQQQVSK), and glutamine 179. A Nuclear localization signal motif is present at residues 300–310 (RHRKLYAKKHQ). Aspartate 365 is an ATP binding site.

It belongs to the inositol phosphokinase (IPK) family. The cofactor is Mg(2+).

The protein resides in the nucleus. The catalysed reaction is 1D-myo-inositol 1,4,5-trisphosphate + 2 ATP = 1D-myo-inositol 1,3,4,5,6-pentakisphosphate + 2 ADP + 2 H(+). The enzyme catalyses 1D-myo-inositol 1,3,4,6-tetrakisphosphate + ATP = 1D-myo-inositol 1,3,4,5,6-pentakisphosphate + ADP + H(+). It carries out the reaction 1-octadecanoyl-2-(5Z,8Z,11Z,14Z)-eicosatetraenoyl-sn-glycero-3-phospho-1D-myo-inositol 4,5-bisphosphate + ATP = 1-octadecanoyl-2-(5Z,8Z,11Z,14Z-eicosatetraenoyl)-sn-glycero-3-phospho-(1D-myo-inositol 3,4,5-triphosphate) + ADP + H(+). It catalyses the reaction a 1,2-diacyl-sn-glycero-3-phospho-(1D-myo-inositol-4,5-bisphosphate) + ATP = a 1,2-diacyl-sn-glycero-3-phospho-(1D-myo-inositol-3,4,5-trisphosphate) + ADP + H(+). The catalysed reaction is 1D-myo-inositol 1,4,5,6-tetrakisphosphate + ATP = 1D-myo-inositol 1,3,4,5,6-pentakisphosphate + ADP + H(+). It functions in the pathway phospholipid metabolism; phosphatidylinositol metabolism. Its function is as follows. Inositol phosphate kinase with a broad substrate specificity. Phosphorylates inositol 1,4,5-trisphosphate (Ins(1,4,5)P3) first to inositol 1,3,4,5-tetrakisphosphate and then to inositol 1,3,4,5,6-pentakisphosphate (Ins(1,3,4,5,6)P5). Phosphorylates inositol 1,3,4,6-tetrakisphosphate (Ins(1,3,4,6)P4). Phosphorylates inositol 1,4,5,6-tetrakisphosphate (Ins(1,4,5,6)P4). Phosphorylates glycero-3-phospho-1D-myo-inositol 4,5-bisphosphate to glycero-3-phospho-1D-myo-inositol 3,4,5-trisphosphate. Plays an important role in MLKL-mediated necroptosis via its role in the biosynthesis of inositol pentakisphosphate (InsP5) and inositol hexakisphosphate (InsP6). Binding of these highly phosphorylated inositol phosphates to MLKL mediates the release of an N-terminal auto-inhibitory region, leading to activation of the kinase. Essential for activated phospho-MLKL to oligomerize and localize to the cell membrane during necroptosis. Required for normal embryonic development, probably via its role in the biosynthesis of inositol 1,3,4,5,6-pentakisphosphate (Ins(1,3,4,5,6)P5) and inositol hexakisphosphate (InsP6). The protein is Inositol polyphosphate multikinase (Ipmk) of Mus musculus (Mouse).